A 508-amino-acid polypeptide reads, in one-letter code: Cytochrome P450 4A12B (508 aa).

Positions 1–37 are cleaved as a signal peptide; the sequence is MSASALSSIRFPGSISEYLQVASVLSLLLLLFKTAQL. 2 residues coordinate heme: glutamate 319 and cysteine 455.

This sequence belongs to the cytochrome P450 family. Heme serves as cofactor. Expressed in lung, but almost undetectable in the kidneys of five different strains.

It localises to the endoplasmic reticulum membrane. It is found in the microsome membrane. The enzyme catalyses an organic molecule + reduced [NADPH--hemoprotein reductase] + O2 = an alcohol + oxidized [NADPH--hemoprotein reductase] + H2O + H(+). The catalysed reaction is dodecanoate + reduced [NADPH--hemoprotein reductase] + O2 = 11-hydroxydodecanoate + oxidized [NADPH--hemoprotein reductase] + H2O + H(+). It carries out the reaction dodecanoate + reduced [NADPH--hemoprotein reductase] + O2 = 12-hydroxydodecanoate + oxidized [NADPH--hemoprotein reductase] + H2O + H(+). It catalyses the reaction (5Z,8Z,11Z,14Z)-eicosatetraenoate + reduced [NADPH--hemoprotein reductase] + O2 = 18-hydroxy-(5Z,8Z,11Z,14Z)-eicosatetraenoate + oxidized [NADPH--hemoprotein reductase] + H2O + H(+). The enzyme catalyses (5Z,8Z,11Z,14Z)-eicosatetraenoate + reduced [NADPH--hemoprotein reductase] + O2 = 19-hydroxy-(5Z,8Z,11Z,14Z)-eicosatetraenoate + oxidized [NADPH--hemoprotein reductase] + H2O + H(+). The catalysed reaction is (5Z,8Z,11Z,14Z)-eicosatetraenoate + reduced [NADPH--hemoprotein reductase] + O2 = 20-hydroxy-(5Z,8Z,11Z,14Z)-eicosatetraenoate + oxidized [NADPH--hemoprotein reductase] + H2O + H(+). It carries out the reaction (5Z,8Z,11Z,14Z,17Z)-eicosapentaenoate + reduced [NADPH--hemoprotein reductase] + O2 = 19-hydroxy-(5Z,8Z,11Z,14Z,17Z)-eicosapentaenoate + oxidized [NADPH--hemoprotein reductase] + H2O + H(+). It catalyses the reaction (5Z,8Z,11Z,14Z,17Z)-eicosapentaenoate + reduced [NADPH--hemoprotein reductase] + O2 = 20-hydroxy-(5Z,8Z,11Z,14Z,17Z)-eicosapentaenoate + oxidized [NADPH--hemoprotein reductase] + H2O + H(+). The enzyme catalyses (5Z,8Z,11Z,14Z,17Z)-eicosapentaenoate + reduced [NADPH--hemoprotein reductase] + O2 = (17S,18R)-epoxy-(5Z,8Z,11Z,14Z)-eicosatetraenoate + oxidized [NADPH--hemoprotein reductase] + H2O + H(+). The catalysed reaction is (5Z,8Z,11Z,14Z,17Z)-eicosapentaenoate + reduced [NADPH--hemoprotein reductase] + O2 = (17R,18S)-epoxy-(5Z,8Z,11Z,14Z)-eicosatetraenoate + oxidized [NADPH--hemoprotein reductase] + H2O + H(+). It functions in the pathway lipid metabolism; fatty acid metabolism. Its activity is regulated as follows. Activated by cytochrome b5. The Vmax almost doubles in the presence of cytochrome b5. Functionally, a cytochrome P450 monooxygenase involved in the metabolism of fatty acids and their oxygenated derivatives (oxylipins). Mechanistically, uses molecular oxygen inserting one oxygen atom into a substrate, and reducing the second into a water molecule, with two electrons provided by NADPH via cytochrome P450 reductase (CPR; NADPH-ferrihemoprotein reductase). Catalyzes predominantly the oxidation of the terminal carbon (omega-oxidation) of saturated and unsaturated fatty acids. May act as a major omega-hydroxylase for dodecanoic (lauric) acid in kidney. Participates in omega-hydroxylation of (5Z,8Z,11Z,14Z)-eicosatetraenoic acid (arachidonate) to 20-hydroxyeicosatetraenoic acid (20-HETE), a signaling molecule acting both as vasoconstrictive and natriuretic with overall effect on arterial blood pressure. Acts as an omega-hydroxylase and epoxidase toward (5Z,8Z,11Z,14Z,17Z)-eicosapentaenoc acid (EPA). Catalyzes the epoxidation of the last double bond of EPA with no preferred stereoselectivity, producing both (R,S) and (S,R) stereoisomers. Can also catalyze the omega-1 and omega-2 oxidation of fatty acids with lower efficiency. The protein is Cytochrome P450 4A12B of Mus musculus (Mouse).